A 296-amino-acid chain; its full sequence is Farnesyl diphosphate synthase (296 aa).

3 residues coordinate isopentenyl diphosphate: K46, R49, and H78. Residues D85 and D91 each contribute to the Mg(2+) site. R96 provides a ligand contact to (2E)-geranyl diphosphate. R97 is a binding site for isopentenyl diphosphate. K182, T183, Q220, and K237 together coordinate (2E)-geranyl diphosphate.

It belongs to the FPP/GGPP synthase family. Mg(2+) serves as cofactor.

The protein resides in the cytoplasm. The catalysed reaction is isopentenyl diphosphate + (2E)-geranyl diphosphate = (2E,6E)-farnesyl diphosphate + diphosphate. The chain is Farnesyl diphosphate synthase (ispA) from Bacillus subtilis (strain 168).